A 716-amino-acid polypeptide reads, in one-letter code: Polycystin-2 (716 aa).

2 stretches are compositionally biased toward basic and acidic residues: residues 1–10 (MNYGAADERW) and 30–41 (MVSEEYEHDKKK). The interval 1–44 (MNYGAADERWANPPQPVAAAEHGPSFDHSMVSEEYEHDKKKNPA) is disordered. At 1–72 (MNYGAADERW…SDGKIKLTAR (72 aa)) the chain is on the cytoplasmic side. A helical transmembrane segment spans residues 73–93 (SFMEVGGYAVFLIVLVYVAFA). The Extracellular segment spans residues 94–324 (QNSIQSYYYS…YQTSGGTRMM (231 aa)). Residues N150 and N177 are each glycosylated (N-linked (GlcNAc...) asparagine). A disulfide bond links C180 and C193. A helical membrane pass occupies residues 325–345 (IFEGIFCGFILYFIFEELFAI). The Cytoplasmic segment spans residues 346–355 (GRHRLHYLTQ). Residues 356-376 (FWNLVDVVLLGFSVATIILSV) traverse the membrane as a helical segment. N-linked (GlcNAc...) asparagine glycosylation occurs at N377. The Extracellular portion of the chain corresponds to 377–409 (NRTKTGVNRVNSVIENGLTNAPFDDVTSSENSY). A helical membrane pass occupies residues 410–430 (LNIKACVVFVAWVKVFKFISV). The Cytoplasmic segment spans residues 431–447 (NKTMSQLSSTLTRSAKD). Residues 448 to 468 (IGGFAVMFAVFFFAFAQFGYL) form a helical membrane-spanning segment. Over 469 to 482 (CFGTQIADYSNLYN) the chain is Extracellular. The segment at residues 483-497 (SAFALLRLILGDFNF) is an intramembrane region (pore-forming). Residues 498 to 510 (SALESCNRFFGPA) are Extracellular-facing. The chain crosses the membrane as a helical span at residues 511-531 (FFIAYVFFVSFILLNMFLAII). Over 532–716 (NDSYVEVKAE…ITSIADKKEE (185 aa)) the chain is Cytoplasmic. Residue S534 is modified to Phosphoserine; by CK2. Residues 613-680 (EKVAEDIADE…IEKQRVQQQD (68 aa)) adopt a coiled-coil conformation. Positions 696–716 (RNRESAARRPTITSIADKKEE) are disordered.

The protein belongs to the polycystin family. In terms of processing, phosphorylated. CK2 (kin-3 and kin-10) and calcineurin act antagonistically to regulate the phosphorylation state. As to expression, exclusively expressed in a subset of 3 categories of adult male sensory neurons: ray neurons, hook neurons and head cephalic (CEM) neurons. Expressed in the male tail.

The protein resides in the cell membrane. It is found in the cell projection. It localises to the cilium membrane. Its subcellular location is the cilium. The protein localises to the axon. The protein resides in the dendrite. It is found in the perikaryon. It localises to the endoplasmic reticulum membrane. In terms of biological role, functions as a calcium permeable cation channel. Required for 2 aspects of male mating behavior: response to hermaphrodite contact and vulva location. Acts in the same pathway as lov-1 and atp-2 in response behavior. This is Polycystin-2 from Caenorhabditis elegans.